The following is a 509-amino-acid chain: Histidine ammonia-lyase (509 aa).

The segment at residues 142-144 (ASG) is a cross-link (5-imidazolinone (Ala-Gly)). A 2,3-didehydroalanine (Ser) modification is found at S143.

Belongs to the PAL/histidase family. In terms of processing, contains an active site 4-methylidene-imidazol-5-one (MIO), which is formed autocatalytically by cyclization and dehydration of residues Ala-Ser-Gly.

The protein localises to the cytoplasm. The enzyme catalyses L-histidine = trans-urocanate + NH4(+). Its pathway is amino-acid degradation; L-histidine degradation into L-glutamate; N-formimidoyl-L-glutamate from L-histidine: step 1/3. In Sphingopyxis alaskensis (strain DSM 13593 / LMG 18877 / RB2256) (Sphingomonas alaskensis), this protein is Histidine ammonia-lyase.